The following is a 970-amino-acid chain: Protein bicaudal C homolog 1-B (970 aa).

Residues 1–50 are disordered; that stretch reads MAAQCGGYMNQSDPGSNSERSADSPLPGSEDDSPGSAAPHDPEWREERFR. The segment covering 9 to 19 has biased composition (polar residues); the sequence is MNQSDPGSNSE. Positions 40-50 are enriched in basic and acidic residues; sequence HDPEWREERFR. 2 consecutive KH domains span residues 130 to 197 and 282 to 346; these read RVTL…RVRI and PVST…RQYL. A compositionally biased stretch (polar residues) spans 596-605; it reads EASRQSNNHS. Disordered regions lie at residues 596–638, 677–696, and 773–841; these read EASR…SANT, SDSE…APGS, and RRAN…NKSA. Residues 606-616 are compositionally biased toward basic and acidic residues; that stretch reads SAEEVNSKTDS. Polar residues-rich tracts occupy residues 783–810 and 819–831; these read TMST…GSDS and IDSS…SSIG. The SAM domain occupies 869-932; that stretch reads FKGSDLPELF…LLAISELNKN (64 aa).

The protein belongs to the BicC family.

Functionally, putative RNA-binding protein. May be involved in regulating gene expression during embryonic development. Seems to be involved in endoderm formation. Ectopic expression results in endoderm formation in the absence of mesoderm induction. This Xenopus laevis (African clawed frog) protein is Protein bicaudal C homolog 1-B (bicc1-b).